We begin with the raw amino-acid sequence, 170 residues long: Acireductone dioxygenase (170 aa).

4 residues coordinate Fe(2+): His-99, His-101, Glu-105, and His-144. Residues His-99, His-101, Glu-105, and His-144 each coordinate Ni(2+).

Belongs to the acireductone dioxygenase (ARD) family. Monomer. Fe(2+) is required as a cofactor. Requires Ni(2+) as cofactor.

The enzyme catalyses 1,2-dihydroxy-5-(methylsulfanyl)pent-1-en-3-one + O2 = 3-(methylsulfanyl)propanoate + CO + formate + 2 H(+). The catalysed reaction is 1,2-dihydroxy-5-(methylsulfanyl)pent-1-en-3-one + O2 = 4-methylsulfanyl-2-oxobutanoate + formate + 2 H(+). It functions in the pathway amino-acid biosynthesis; L-methionine biosynthesis via salvage pathway; L-methionine from S-methyl-5-thio-alpha-D-ribose 1-phosphate: step 5/6. In terms of biological role, catalyzes 2 different reactions between oxygen and the acireductone 1,2-dihydroxy-3-keto-5-methylthiopentene (DHK-MTPene) depending upon the metal bound in the active site. Fe-containing acireductone dioxygenase (Fe-ARD) produces formate and 2-keto-4-methylthiobutyrate (KMTB), the alpha-ketoacid precursor of methionine in the methionine recycle pathway. Ni-containing acireductone dioxygenase (Ni-ARD) produces methylthiopropionate, carbon monoxide and formate, and does not lie on the methionine recycle pathway. In Bacillus mycoides (strain KBAB4) (Bacillus weihenstephanensis), this protein is Acireductone dioxygenase.